The chain runs to 262 residues: Phosphatidylserine decarboxylase proenzyme (262 aa).

Catalysis depends on charge relay system; for autoendoproteolytic cleavage activity residues Asp86, His142, and Ser226. Ser226 (schiff-base intermediate with substrate; via pyruvic acid; for decarboxylase activity) is an active-site residue. The residue at position 226 (Ser226) is a Pyruvic acid (Ser); by autocatalysis.

The protein belongs to the phosphatidylserine decarboxylase family. PSD-B subfamily. Prokaryotic type I sub-subfamily. In terms of assembly, heterodimer of a large membrane-associated beta subunit and a small pyruvoyl-containing alpha subunit. Requires pyruvate as cofactor. Post-translationally, is synthesized initially as an inactive proenzyme. Formation of the active enzyme involves a self-maturation process in which the active site pyruvoyl group is generated from an internal serine residue via an autocatalytic post-translational modification. Two non-identical subunits are generated from the proenzyme in this reaction, and the pyruvate is formed at the N-terminus of the alpha chain, which is derived from the carboxyl end of the proenzyme. The autoendoproteolytic cleavage occurs by a canonical serine protease mechanism, in which the side chain hydroxyl group of the serine supplies its oxygen atom to form the C-terminus of the beta chain, while the remainder of the serine residue undergoes an oxidative deamination to produce ammonia and the pyruvoyl prosthetic group on the alpha chain. During this reaction, the Ser that is part of the protease active site of the proenzyme becomes the pyruvoyl prosthetic group, which constitutes an essential element of the active site of the mature decarboxylase.

The protein resides in the cell membrane. It catalyses the reaction a 1,2-diacyl-sn-glycero-3-phospho-L-serine + H(+) = a 1,2-diacyl-sn-glycero-3-phosphoethanolamine + CO2. The protein operates within phospholipid metabolism; phosphatidylethanolamine biosynthesis; phosphatidylethanolamine from CDP-diacylglycerol: step 2/2. Its function is as follows. Catalyzes the formation of phosphatidylethanolamine (PtdEtn) from phosphatidylserine (PtdSer). This Bacillus anthracis protein is Phosphatidylserine decarboxylase proenzyme.